We begin with the raw amino-acid sequence, 342 residues long: MSLLITSLAWGALLDPEVSSASKVALLDAVLEASTLLLRQNGSVRKFLALVAVLCLAEKTGSDNLPALILGSISTAASLSLHLETALRKSCVSNDQAVQTKRAMWILYCIDKSYALRWQTFSLVGDGSLPTTNPPDTALPSEVATTLSLEWLRIRSQYSKICSNILQLGVGAEGEPSENRSNRAVVLSAALEEWYGSVEISQMMLSLEHSDAVHMKLQTSYHYYEARFQLLSISLPDPRSSSPTGSQECREVLRRSIREVITGSNTITSEYLLQDCNHLFIQTLALSMLALDILLESDQGCGKENRALLSIVAGFFARVDIILPQSSIFEEVSNLIEILTYR.

The first 20 residues, 1 to 20 (MSLLITSLAWGALLDPEVSS), serve as a signal peptide directing secretion.

It functions in the pathway mycotoxin biosynthesis. Its function is as follows. Part of the gene clusters that mediate the biosynthesis of AM-toxins, host-selective toxins (HSTs) causing Alternaria blotch on apple, a worldwide distributed disease. AM-toxins are cyclic depsipeptides containing the 3 residues 2-hydroxy-isovaleric acid (2-HIV), dehydroalanine, L-alanine which are common for all 3 AM-toxins I to III. The fourth precursor is L-alpha-amino-methoxyphenyl-valeric acid (L-Amv) for AM-toxin I, L-alpha-amino-phenyl-valeric acid (L-Apv) for AM-toxin II, and L-alpha-amino-hydroxyphenyl-valeric acid (L-Ahv) for AM-toxin III. AM-toxins have two target sites for affecting susceptible apple cells; they cause invagination of the plasma membrane and electrolyte loss and chloroplast disorganization. The non-ribosomal peptide synthetase AMT1 contains 4 catalytic modules and is responsible for activation of each residue in AM-toxin. The aldo-keto reductase AMT2 catalyzes the conversion of 2-keto-isovaleric acid (2-KIV) to 2-hydroxy-isovaleric acid (2-HIV), one of the precursor residues incorporated by AMT1 during AM-toxin biosynthesis, by reduction of its ketone to an alcohol. The cytochrome P450 monooxygenase AMT3 and the thioesterase AMT4 are also important for AM-toxin production, but their exact function within the AM-toxin biosynthesis are not known yet. Up to 21 proteins (including AMT1 to AMT4) are predicted to be involved in AM-toxin biosynthesis since their expression ishighly up-regulated in AM-toxin-producing cultures. The polypeptide is AM-toxin biosynthesis protein 12 (Alternaria alternata (Alternaria rot fungus)).